An 88-amino-acid chain; its full sequence is Homeobox protein knotted-1-like 3 (88 aa).

Residues 4–24 form the ELK domain; that stretch reads ELKKQLLRKYSGCLGNLRKEL. The segment at residues 25-88 is a DNA-binding region (homeobox; TALE-type); that stretch reads CKKRKKDKLP…NQRKRHWKPS (64 aa).

The protein belongs to the TALE/KNOX homeobox family. As to expression, strongly expressed in ear inflorescence primordia and shoot meristem. Weakly expressed in embryos. Absent from leaves.

Its subcellular location is the nucleus. Functionally, probably binds to the DNA sequence 5'-TGAC-3'. The protein is Homeobox protein knotted-1-like 3 (KNOX3) of Zea mays (Maize).